A 581-amino-acid polypeptide reads, in one-letter code: Bifunctional lycopene cyclase/phytoene synthase (581 aa).

The tract at residues 1 to 243 (MGFDYALVHL…IVFGQLAFDN (243 aa)) is lycopene beta-cyclase. The next 7 helical transmembrane spans lie at 3–23 (FDYA…LTLL), 35–55 (KVAF…SYLI), 65–85 (HVII…FFVV), 120–140 (LKRL…WFCV), 152–172 (ILIW…QFII), 173–193 (GLPF…LWIV), and 221–241 (IEEA…QLAF). Residues 250–581 (AFPHLFPDPS…RVLVAWRTLN (332 aa)) are phytoene synthase.

This sequence in the N-terminal section; belongs to the lycopene beta-cyclase family. In the C-terminal section; belongs to the phytoene/squalene synthase family.

It is found in the membrane. It catalyses the reaction all-trans-lycopene = gamma-carotene. The enzyme catalyses gamma-carotene = all-trans-beta-carotene. It carries out the reaction 2 (2E,6E,10E)-geranylgeranyl diphosphate = 15-cis-phytoene + 2 diphosphate. Its pathway is carotenoid biosynthesis; beta-carotene biosynthesis. It participates in carotenoid biosynthesis; phytoene biosynthesis; all-trans-phytoene from geranylgeranyl diphosphate: step 1/1. Bifunctional enzyme that catalyzes the reactions from geranylgeranyl diphosphate to phytoene (phytoene synthase) and lycopene to beta-carotene via the intermediate gamma-carotene (lycopene cyclase). This chain is Bifunctional lycopene cyclase/phytoene synthase, found in Leptosphaeria maculans (strain JN3 / isolate v23.1.3 / race Av1-4-5-6-7-8) (Blackleg fungus).